We begin with the raw amino-acid sequence, 95 residues long: Feather keratin B-4 (95 aa).

Ser1 is subject to N-acetylserine.

It belongs to the avian keratin family. As to quaternary structure, the avian keratins (F-ker, S-ker, C-ker and B-ker) are a complex mixture of very similar polypeptides.

This chain is Feather keratin B-4, found in Columba livia (Rock dove).